The chain runs to 153 residues: MRCPACHHNGTRVLDSRPAHEGRSIRRRRECESCNHRFTTFEMIEEVPLIVVKKDGTRQEFSSDKILRGLIRACEKRPVPLETLEGIVNEVERELRGQGKNEVDSKEIGELVMERLANVDDVAYVRFASVYRQFKDINVFIQELKELMERDDR.

The tract at residues methionine 1–glycine 22 is disordered. A zinc finger spans residues cysteine 3–cysteine 34. The ATP-cone domain occupies leucine 49–valine 139.

The protein belongs to the NrdR family. The cofactor is Zn(2+).

Its function is as follows. Negatively regulates transcription of bacterial ribonucleotide reductase nrd genes and operons by binding to NrdR-boxes. The chain is Transcriptional repressor NrdR from Halalkalibacterium halodurans (strain ATCC BAA-125 / DSM 18197 / FERM 7344 / JCM 9153 / C-125) (Bacillus halodurans).